The primary structure comprises 472 residues: Serine/threonine-protein kinase ULK3 (472 aa).

The 257-residue stretch at 14 to 270 folds into the Protein kinase domain; sequence FILTERLGSG…FQDFFAHPWV (257 aa). ATP contacts are provided by residues 20–28 and K44; that span reads LGSGTYATV. The active-site Proton acceptor is D137. A Phosphoserine modification is found at S176. Residues 280–348 enclose the MIT 1 domain; the sequence is SLGRATALVV…SRAEELKAIV (69 aa). 4 positions are modified to phosphoserine; by autocatalysis: S300, S350, S384, and S464. An MIT 2 domain is found at 375 to 444; sequence RLLAALEVAS…ARAEYLKEQV (70 aa).

The protein belongs to the protein kinase superfamily. Ser/Thr protein kinase family. APG1/unc-51/ULK1 subfamily. Interacts (via protein kinase domain) with SUFU. Autophosphorylated. Autophosphorylation is blocked by interaction with SUFU. As to expression, widely expressed. Highest levels observed in fetal brain. In adult tissues, high levels in brain, liver and kidney, moderate levels in testis and adrenal gland and low levels in heart, lung, stomach, thymus, prostate and placenta. In the brain, highest expression in the hippocampus, high levels also detected in the cerebellum, olfactory bulb and optic nerve. In the central nervous system, lowest levels in the spinal cord.

The protein localises to the cytoplasm. It catalyses the reaction L-seryl-[protein] + ATP = O-phospho-L-seryl-[protein] + ADP + H(+). The enzyme catalyses L-threonyl-[protein] + ATP = O-phospho-L-threonyl-[protein] + ADP + H(+). In terms of biological role, serine/threonine protein kinase that acts as a regulator of Sonic hedgehog (SHH) signaling and autophagy. Acts as a negative regulator of SHH signaling in the absence of SHH ligand: interacts with SUFU, thereby inactivating the protein kinase activity and preventing phosphorylation of GLI proteins (GLI1, GLI2 and/or GLI3). Positively regulates SHH signaling in the presence of SHH: dissociates from SUFU, autophosphorylates and mediates phosphorylation of GLI2, activating it and promoting its nuclear translocation. Phosphorylates in vitro GLI2, as well as GLI1 and GLI3, although less efficiently. Also acts as a regulator of autophagy: following cellular senescence, able to induce autophagy. In Homo sapiens (Human), this protein is Serine/threonine-protein kinase ULK3 (ULK3).